A 339-amino-acid chain; its full sequence is DNA-directed RNA polymerase subunit alpha (339 aa).

The interval 1–237 (MENELMYMNW…EQMNVFINFD (237 aa)) is alpha N-terminal domain (alpha-NTD). Positions 256–339 (FNENLYRSVN…PPAEDNKEGE (84 aa)) are alpha C-terminal domain (alpha-CTD).

This sequence belongs to the RNA polymerase alpha chain family. In terms of assembly, homodimer. The RNAP catalytic core consists of 2 alpha, 1 beta, 1 beta' and 1 omega subunit. When a sigma factor is associated with the core the holoenzyme is formed, which can initiate transcription.

It catalyses the reaction RNA(n) + a ribonucleoside 5'-triphosphate = RNA(n+1) + diphosphate. Its function is as follows. DNA-dependent RNA polymerase catalyzes the transcription of DNA into RNA using the four ribonucleoside triphosphates as substrates. This Desulfosudis oleivorans (strain DSM 6200 / JCM 39069 / Hxd3) (Desulfococcus oleovorans) protein is DNA-directed RNA polymerase subunit alpha.